We begin with the raw amino-acid sequence, 501 residues long: Archaemetzincin-1 (501 aa).

Residue His261 participates in Zn(2+) binding. Glu262 functions as the Proton acceptor in the catalytic mechanism. Zn(2+) is bound by residues His265, Cys272, Cys277, Cys296, and Cys299. A disordered region spans residues 349-370 (DSGMGCESDTEPVTSPSEPVTP).

Belongs to the peptidase M54 family. Zn(2+) is required as a cofactor.

Probable zinc metalloprotease. The chain is Archaemetzincin-1 (Amz1) from Rattus norvegicus (Rat).